We begin with the raw amino-acid sequence, 494 residues long: Guanosine-5'-triphosphate,3'-diphosphate pyrophosphatase (494 aa).

This sequence belongs to the GppA/Ppx family. GppA subfamily.

The catalysed reaction is guanosine 3'-diphosphate 5'-triphosphate + H2O = guanosine 3',5'-bis(diphosphate) + phosphate + H(+). The protein operates within purine metabolism; ppGpp biosynthesis; ppGpp from GTP: step 2/2. Functionally, catalyzes the conversion of pppGpp to ppGpp. Guanosine pentaphosphate (pppGpp) is a cytoplasmic signaling molecule which together with ppGpp controls the 'stringent response', an adaptive process that allows bacteria to respond to amino acid starvation, resulting in the coordinated regulation of numerous cellular activities. The chain is Guanosine-5'-triphosphate,3'-diphosphate pyrophosphatase from Cronobacter sakazakii (strain ATCC BAA-894) (Enterobacter sakazakii).